The following is a 308-amino-acid chain: MIIVTGGAGFIGSNIVKALNDLGRKDILVVDNLKDGTKFANLVDLDIADYCDKEDFIASIIAGDEFGDIDAVFHEGACSATTEWDGKYIMHNNYEYSKELLHYCLDREIPFFYASSAATYGDTKVFREEREFEGPLNVYGYSKFLFDQYVRNILPEAKSPVCGFRYFNVYGPRENHKGSMASVAFHLNNQILKGENPKLFAGSEGFRRDFVYVGDVAAVNIWCWQNGISGIYNLGTGNAESFRAVADAVVKFHGKGEIETIPFPEHLKSRYQEYTQADLTKLRSTGYDKPFKTVAEGVTEYMAWLNRK.

NADP(+) contacts are provided by residues 10 to 11 (FI), 31 to 32 (DN), K38, K53, 75 to 79 (EGACS), and N92. Residue Y139 is the Proton acceptor of the active site. K143 serves as a coordination point for NADP(+). N168 serves as a coordination point for substrate. NADP(+) is bound by residues V169 and K177. The Proton acceptor role is filled by K177. Residues S179, H186, 200–203 (FAGS), R208, and Y271 contribute to the substrate site.

It belongs to the NAD(P)-dependent epimerase/dehydratase family. HldD subfamily. In terms of assembly, homopentamer. The cofactor is NADP(+).

The catalysed reaction is ADP-D-glycero-beta-D-manno-heptose = ADP-L-glycero-beta-D-manno-heptose. It functions in the pathway nucleotide-sugar biosynthesis; ADP-L-glycero-beta-D-manno-heptose biosynthesis; ADP-L-glycero-beta-D-manno-heptose from D-glycero-beta-D-manno-heptose 7-phosphate: step 4/4. In terms of biological role, catalyzes the interconversion between ADP-D-glycero-beta-D-manno-heptose and ADP-L-glycero-beta-D-manno-heptose via an epimerization at carbon 6 of the heptose. The chain is ADP-L-glycero-D-manno-heptose-6-epimerase from Haemophilus influenzae (strain 86-028NP).